The following is a 278-amino-acid chain: Large ribosomal subunit protein uL2 (278 aa).

Disordered stretches follow at residues 1-53 (MAIR…TTRH) and 224-278 (VVMN…NKKR). A compositionally biased stretch (basic and acidic residues) spans 23-33 (EITRSTPEKSL). Residues 258-267 (RNPNRYSNNM) are compositionally biased toward polar residues. Positions 269-278 (VRRRRPNKKR) are enriched in basic residues.

The protein belongs to the universal ribosomal protein uL2 family. As to quaternary structure, part of the 50S ribosomal subunit. Forms a bridge to the 30S subunit in the 70S ribosome.

Its function is as follows. One of the primary rRNA binding proteins. Required for association of the 30S and 50S subunits to form the 70S ribosome, for tRNA binding and peptide bond formation. It has been suggested to have peptidyltransferase activity; this is somewhat controversial. Makes several contacts with the 16S rRNA in the 70S ribosome. This is Large ribosomal subunit protein uL2 from Corynebacterium aurimucosum (strain ATCC 700975 / DSM 44827 / CIP 107346 / CN-1) (Corynebacterium nigricans).